We begin with the raw amino-acid sequence, 474 residues long: tRNA-2-methylthio-N(6)-dimethylallyladenosine synthase (474 aa).

The MTTase N-terminal domain occupies 3 to 120 (KKLLIKTWGC…LPEMIKQSQS (118 aa)). [4Fe-4S] cluster contacts are provided by C12, C49, C83, C157, C161, and C164. Residues 143 to 375 (RAEGATAFVS…QQQINAQAMR (233 aa)) enclose the Radical SAM core domain. In terms of domain architecture, TRAM spans 378-441 (RLMLGTEQRV…ANSLRGEIVR (64 aa)).

Belongs to the methylthiotransferase family. MiaB subfamily. As to quaternary structure, monomer. It depends on [4Fe-4S] cluster as a cofactor.

It is found in the cytoplasm. It catalyses the reaction N(6)-dimethylallyladenosine(37) in tRNA + (sulfur carrier)-SH + AH2 + 2 S-adenosyl-L-methionine = 2-methylsulfanyl-N(6)-dimethylallyladenosine(37) in tRNA + (sulfur carrier)-H + 5'-deoxyadenosine + L-methionine + A + S-adenosyl-L-homocysteine + 2 H(+). Functionally, catalyzes the methylthiolation of N6-(dimethylallyl)adenosine (i(6)A), leading to the formation of 2-methylthio-N6-(dimethylallyl)adenosine (ms(2)i(6)A) at position 37 in tRNAs that read codons beginning with uridine. This chain is tRNA-2-methylthio-N(6)-dimethylallyladenosine synthase, found in Vibrio vulnificus (strain YJ016).